A 272-amino-acid polypeptide reads, in one-letter code: 3-methyl-2-oxobutanoate hydroxymethyltransferase (272 aa).

Residues aspartate 42 and aspartate 86 each contribute to the Mg(2+) site. Residues 42 to 43 (DS), aspartate 86, and lysine 116 each bind 3-methyl-2-oxobutanoate. A Mg(2+)-binding site is contributed by glutamate 118. Glutamate 185 (proton acceptor) is an active-site residue. Positions 251–272 (LKEQRDQRATPTTPPPPPAPDC) are disordered. Over residues 262–272 (TTPPPPPAPDC) the composition is skewed to pro residues.

It belongs to the PanB family. Homodecamer; pentamer of dimers. Requires Mg(2+) as cofactor.

The protein resides in the cytoplasm. The catalysed reaction is 3-methyl-2-oxobutanoate + (6R)-5,10-methylene-5,6,7,8-tetrahydrofolate + H2O = 2-dehydropantoate + (6S)-5,6,7,8-tetrahydrofolate. It functions in the pathway cofactor biosynthesis; (R)-pantothenate biosynthesis; (R)-pantoate from 3-methyl-2-oxobutanoate: step 1/2. Catalyzes the reversible reaction in which hydroxymethyl group from 5,10-methylenetetrahydrofolate is transferred onto alpha-ketoisovalerate to form ketopantoate. In Synechococcus sp. (strain CC9311), this protein is 3-methyl-2-oxobutanoate hydroxymethyltransferase.